A 954-amino-acid polypeptide reads, in one-letter code: SWI/SNF-related matrix-associated actin-dependent regulator of chromatin subfamily A-like protein 1 (954 aa).

Disordered regions lie at residues 1–20 and 27–238; these read MSLPLTEEQRKKIEENRQKA and KLLA…NSQK. N-acetylserine is present on Ser-2. A coiled-coil region spans residues 3–34; sequence LPLTEEQRKKIEENRQKALARRAEKLLAEQHQ. The mediates interaction with RPA2 stretch occupies residues 5–30; sequence LTEEQRKKIEENRQKALARRAEKLLA. A compositionally biased stretch (basic and acidic residues) spans 7-20; sequence EEQRKKIEENRQKA. Polar residues predominate over residues 72–83; sequence KQQNLSSSSNAD. Phosphoserine is present on residues Ser-112, Ser-123, Ser-129, and Ser-151. Composition is skewed to polar residues over residues 171 to 183 and 197 to 238; these read KSSQETPAHSSGQ and ASPS…NSQK. Residue Ser-198 is modified to Phosphoserine. 2 HARP domains span residues 226–303 and 327–398; these read SGSS…QPLE and SLSF…DPLP. A Helicase ATP-binding domain is found at 445–600; sequence NFAIAKGGRL…YTQIIAVKPT (156 aa). 458–465 is a binding site for ATP; sequence DDMGLGKT. The DESH box signature appears at 549–552; that stretch reads DESH. A Nuclear localization signal motif is present at residues 644 to 661; that stretch reads RRLKSDVLSQLPAKQRKI. The region spanning 716-869 is the Helicase C-terminal domain; it reads YILDLLESGR…ETNFSEMTES (154 aa). The segment at 904–934 is disordered; the sequence is ESFDPGSASGTSGSSSQNMGDTLDESSLTAS. The segment covering 909–919 has biased composition (low complexity); it reads GSASGTSGSSS. The segment covering 920 to 934 has biased composition (polar residues); that stretch reads QNMGDTLDESSLTAS.

It belongs to the SNF2/RAD54 helicase family. SMARCAL1 subfamily. As to quaternary structure, interacts with RPA2; the interaction is direct and mediates the recruitment by the RPA complex of SMARCAL1 to sites of DNA damage. In terms of processing, DNA damage-regulated phosphorylation by kinases that may include ATM, ATR and PRKDC. In terms of tissue distribution, ubiquitously expressed, with high levels in testis.

The protein resides in the nucleus. The catalysed reaction is ATP + H2O = ADP + phosphate + H(+). In terms of biological role, ATP-dependent annealing helicase that binds selectively to fork DNA relative to ssDNA or dsDNA and catalyzes the rewinding of the stably unwound DNA. Rewinds single-stranded DNA bubbles that are stably bound by replication protein A (RPA). Acts throughout the genome to reanneal stably unwound DNA, performing the opposite reaction of many enzymes, such as helicases and polymerases, that unwind DNA. May play an important role in DNA damage response by acting at stalled replication forks. In Homo sapiens (Human), this protein is SWI/SNF-related matrix-associated actin-dependent regulator of chromatin subfamily A-like protein 1.